Here is an 869-residue protein sequence, read N- to C-terminus: Aminopeptidase N (869 aa).

Residues Glu122 and 262-266 (GAMEN) each bind substrate. His298 provides a ligand contact to Zn(2+). Residue Glu299 is the Proton acceptor of the active site. 2 residues coordinate Zn(2+): His302 and Glu321.

Belongs to the peptidase M1 family. It depends on Zn(2+) as a cofactor.

The protein localises to the cell inner membrane. It carries out the reaction Release of an N-terminal amino acid, Xaa-|-Yaa- from a peptide, amide or arylamide. Xaa is preferably Ala, but may be most amino acids including Pro (slow action). When a terminal hydrophobic residue is followed by a prolyl residue, the two may be released as an intact Xaa-Pro dipeptide.. Aminopeptidase N is involved in the degradation of intracellular peptides generated by protein breakdown during normal growth as well as in response to nutrient starvation. The sequence is that of Aminopeptidase N (pepN) from Haemophilus influenzae (strain ATCC 51907 / DSM 11121 / KW20 / Rd).